A 341-amino-acid polypeptide reads, in one-letter code: Methionine import ATP-binding protein MetN 2 (341 aa).

Positions 2 to 241 (IKLNQIVKRY…PQHEVTKRFV (240 aa)) constitute an ABC transporter domain. 38-45 (GFSGAGKS) serves as a coordination point for ATP.

This sequence belongs to the ABC transporter superfamily. Methionine importer (TC 3.A.1.24) family. In terms of assembly, the complex is composed of two ATP-binding proteins (MetN), two transmembrane proteins (MetI) and a solute-binding protein (MetQ).

It localises to the cell membrane. It catalyses the reaction L-methionine(out) + ATP + H2O = L-methionine(in) + ADP + phosphate + H(+). It carries out the reaction D-methionine(out) + ATP + H2O = D-methionine(in) + ADP + phosphate + H(+). Its function is as follows. Part of the ABC transporter complex MetNIQ involved in methionine import. Responsible for energy coupling to the transport system. The sequence is that of Methionine import ATP-binding protein MetN 2 from Staphylococcus epidermidis (strain ATCC 35984 / DSM 28319 / BCRC 17069 / CCUG 31568 / BM 3577 / RP62A).